The primary structure comprises 631 residues: E3 ubiquitin-protein ligase Zswim2 (631 aa).

Residues 54 to 87 (FRVLLGNPHECSCPTFLKRGELCKHICWVLLKKF) form an SWIM-type zinc finger. The interval 139–348 (KDINAGDICP…APGYQCRLCL (210 aa)) is UBE2D1-binding. The RING-type 1 zinc-finger motif lies at 147 to 199 (CPICQEVLLEKKLPVTFCRFGCGNNVHIKCMRILANYQDTGSDSSVLRCPLCR). The ZZ-type zinc finger occupies 230–281 (HLGIPCNNCNQLPIEGRCYKCTECVEYHLCQECFDSCCHSSHAFASREKRNQ). The Zn(2+) site is built by C235, C238, C250, C253, C259, C262, H268, and H271. Residues 344-386 (CRLCLKSFSFGQYTRLLPCTHKFHRKCIDNWLLHKCNSCPIDR) form an RING-type 2 zinc finger. Positions 589–614 (SKRQNNSMGKVRQKLGHPPRRPAYPP) are disordered. Over residues 599-608 (VRQKLGHPPR) the composition is skewed to basic residues.

In terms of assembly, dimer. Interacts with UBE2D1. Polyubiquitinated. Polyubiquitination is followed by degradation via the proteasome. As to expression, expressed only in testis.

It carries out the reaction S-ubiquitinyl-[E2 ubiquitin-conjugating enzyme]-L-cysteine + [acceptor protein]-L-lysine = [E2 ubiquitin-conjugating enzyme]-L-cysteine + N(6)-ubiquitinyl-[acceptor protein]-L-lysine.. In terms of biological role, E3 ubiquitin-protein ligase involved in the regulation of Fas-, DR3- and DR4-mediated apoptosis. Functions in conjunction with the UBE2D1, UBE2D3 and UBE2E1 E2 ubiquitin-conjugating enzymes. This chain is E3 ubiquitin-protein ligase Zswim2 (Zswim2), found in Mus musculus (Mouse).